The following is a 195-amino-acid chain: dTTP/UTP pyrophosphatase (195 aa).

Asp73 functions as the Proton acceptor in the catalytic mechanism.

This sequence belongs to the Maf family. YhdE subfamily. Requires a divalent metal cation as cofactor.

The protein resides in the cytoplasm. The catalysed reaction is dTTP + H2O = dTMP + diphosphate + H(+). It carries out the reaction UTP + H2O = UMP + diphosphate + H(+). In terms of biological role, nucleoside triphosphate pyrophosphatase that hydrolyzes dTTP and UTP. May have a dual role in cell division arrest and in preventing the incorporation of modified nucleotides into cellular nucleic acids. The protein is dTTP/UTP pyrophosphatase of Desulfotalea psychrophila (strain LSv54 / DSM 12343).